The sequence spans 779 residues: Pleckstrin homology domain-containing family A member 4 (779 aa).

The PH domain maps to 54–153; sequence PVHIRGWLHK…WLRALGRASR (100 aa). Disordered stretches follow at residues 152–352, 492–670, and 691–764; these read SRAE…LPGP, AGLG…EGHR, and MTGG…LPQD. A Phosphoserine modification is found at Ser164. The span at 184–193 shows a compositional bias: basic and acidic residues; the sequence is SRGEEGRISE. Over residues 315-332 the composition is skewed to polar residues; it reads QHWSQEPRTQAHSGSPTY. The span at 525-535 shows a compositional bias: low complexity; that stretch reads PESLELSSPRS. Basic and acidic residues predominate over residues 536-551; that stretch reads PETDWGRPPGGDKDLA. Position 559 is a phosphoserine (Ser559). A compositionally biased stretch (basic and acidic residues) spans 594–603; that stretch reads QLERMRRNQE. A compositionally biased stretch (polar residues) spans 647–663; it reads LRSSGSWSSPRNTTPYL. The segment covering 704 to 724 has biased composition (pro residues); that stretch reads PGVPLPPSDPTRQETPPPRSP.

In terms of tissue distribution, highly expressed in melanoma. Detected at low levels in heart, skeletal muscle, kidney, liver and small intestine.

It is found in the cytoplasm. Its subcellular location is the membrane. Functionally, binds specifically to phosphatidylinositol 3-phosphate (PtdIns3P), but not to other phosphoinositides. The chain is Pleckstrin homology domain-containing family A member 4 (PLEKHA4) from Homo sapiens (Human).